A 95-amino-acid chain; its full sequence is Aspartyl/glutamyl-tRNA(Asn/Gln) amidotransferase subunit C (95 aa).

The protein belongs to the GatC family. As to quaternary structure, heterotrimer of A, B and C subunits.

It catalyses the reaction L-glutamyl-tRNA(Gln) + L-glutamine + ATP + H2O = L-glutaminyl-tRNA(Gln) + L-glutamate + ADP + phosphate + H(+). The catalysed reaction is L-aspartyl-tRNA(Asn) + L-glutamine + ATP + H2O = L-asparaginyl-tRNA(Asn) + L-glutamate + ADP + phosphate + 2 H(+). In terms of biological role, allows the formation of correctly charged Asn-tRNA(Asn) or Gln-tRNA(Gln) through the transamidation of misacylated Asp-tRNA(Asn) or Glu-tRNA(Gln) in organisms which lack either or both of asparaginyl-tRNA or glutaminyl-tRNA synthetases. The reaction takes place in the presence of glutamine and ATP through an activated phospho-Asp-tRNA(Asn) or phospho-Glu-tRNA(Gln). The chain is Aspartyl/glutamyl-tRNA(Asn/Gln) amidotransferase subunit C from Geobacter sulfurreducens (strain ATCC 51573 / DSM 12127 / PCA).